Consider the following 292-residue polypeptide: Elongation factor Ts (292 aa).

The tract at residues 80–83 (TDSV) is involved in Mg(2+) ion dislocation from EF-Tu.

It belongs to the EF-Ts family.

The protein localises to the cytoplasm. Its function is as follows. Associates with the EF-Tu.GDP complex and induces the exchange of GDP to GTP. It remains bound to the aminoacyl-tRNA.EF-Tu.GTP complex up to the GTP hydrolysis stage on the ribosome. The sequence is that of Elongation factor Ts from Lactiplantibacillus plantarum (strain ATCC BAA-793 / NCIMB 8826 / WCFS1) (Lactobacillus plantarum).